A 441-amino-acid polypeptide reads, in one-letter code: Protein C-ets-1 (441 aa).

K8 and K15 each carry N6-acetyllysine; alternate. Glycyl lysine isopeptide (Lys-Gly) (interchain with G-Cter in SUMO2); alternate cross-links involve residues K8 and K15. T38 is modified (phosphothreonine; by MAPK). One can recognise a PNT domain in the interval 51–136; that stretch reads ATFSGFTKEQ…EHLEILQKED (86 aa). An activation domain; required for transcription activation region spans residues 130 to 243; sequence EILQKEDVKP…DNMCMGRTSR (114 aa). K138 is covalently cross-linked (Glycyl lysine isopeptide (Lys-Gly) (interchain with G-Cter in SUMO2)). Y223 carries the post-translational modification Phosphotyrosine. K227 is covalently cross-linked (Glycyl lysine isopeptide (Lys-Gly) (interchain with G-Cter in SUMO)). Phosphoserine occurs at positions 251 and 254. At T265 the chain carries Phosphothreonine. 4 positions are modified to phosphoserine: S267, S270, S282, and S285. The helix HI-1 stretch occupies residues 304–312; the sequence is FKDYVRDRA. The residue at position 305 (K305) is an N6-acetyllysine. Positions 323 to 330 are helix HI-2; it reads AAALAGYT. Residues 335–415 constitute a DNA-binding region (ETS); the sequence is IQLWQFLLEL…AGKRYVYRFV (81 aa). Residues 418-422 form a helix H4 region; the sequence is LQSLL. The interval 426-432 is helix H5; the sequence is PEELHAM.

The protein belongs to the ETS family. In terms of assembly, binds DNA as a homodimer; homodimerization is required for transcription activation. Interacts with MAF and MAFB. Interacts with PAX5; the interaction alters DNA-binding properties. Interacts with DAXX. Interacts with UBE2I. Interacts with SP100; the interaction is direct and modulates ETS1 transcriptional activity. In terms of processing, sumoylated on Lys-15 and Lys-227, preferentially with SUMO2; which inhibits transcriptional activity. Post-translationally, ubiquitinated; which induces proteasomal degradation. Phosphorylation at Ser-251, Ser-282 and Ser-285 by CaMK2/CaMKII in response to calcium signaling decreases affinity for DNA: an increasing number of phosphoserines causes DNA-binding to become progressively weaker. Highly expressed within lymphoid cells. Isoforms c-ETS-1A and Ets-1 p27 are both detected in all fetal tissues tested, but vary with tissue type in adult tissues. None is detected in brain or kidney.

It localises to the nucleus. The protein localises to the cytoplasm. With respect to regulation, autoinhibited by a module composed of four alpha helices (HI-1, HI-2, H4, and H5) that flank the DNA-binding ETS domain, reducing the affinity for DNA. Phosphorylation by CaMK2/CaMKII in response to calcium signaling decreases affinity for DNA. Functionally, transcription factor. Directly controls the expression of cytokine and chemokine genes in a wide variety of different cellular contexts. May control the differentiation, survival and proliferation of lymphoid cells. May also regulate angiogenesis through regulation of expression of genes controlling endothelial cell migration and invasion. In terms of biological role, acts as a dominant-negative for isoform c-ETS-1A. The sequence is that of Protein C-ets-1 (ETS1) from Homo sapiens (Human).